The primary structure comprises 447 residues: UDP-N-acetylmuramoyl-L-alanyl-D-glutamate--2,6-diaminopimelate ligase (447 aa).

T21 serves as a coordination point for UDP-N-acetyl-alpha-D-muramoyl-L-alanyl-D-glutamate. 74–80 (GTNGKTT) contributes to the ATP binding site. UDP-N-acetyl-alpha-D-muramoyl-L-alanyl-D-glutamate contacts are provided by residues 117-118 (TT), S144, Q150, and R152. The residue at position 184 (K184) is an N6-carboxylysine. Residues R340, 364 to 367 (DNPR), G415, and E419 contribute to the meso-2,6-diaminopimelate site. The Meso-diaminopimelate recognition motif signature appears at 364–367 (DNPR).

The protein belongs to the MurCDEF family. MurE subfamily. Mg(2+) is required as a cofactor. Post-translationally, carboxylation is probably crucial for Mg(2+) binding and, consequently, for the gamma-phosphate positioning of ATP.

The protein resides in the cytoplasm. The catalysed reaction is UDP-N-acetyl-alpha-D-muramoyl-L-alanyl-D-glutamate + meso-2,6-diaminopimelate + ATP = UDP-N-acetyl-alpha-D-muramoyl-L-alanyl-gamma-D-glutamyl-meso-2,6-diaminopimelate + ADP + phosphate + H(+). It participates in cell wall biogenesis; peptidoglycan biosynthesis. Functionally, catalyzes the addition of meso-diaminopimelic acid to the nucleotide precursor UDP-N-acetylmuramoyl-L-alanyl-D-glutamate (UMAG) in the biosynthesis of bacterial cell-wall peptidoglycan. In Helicobacter pylori (strain J99 / ATCC 700824) (Campylobacter pylori J99), this protein is UDP-N-acetylmuramoyl-L-alanyl-D-glutamate--2,6-diaminopimelate ligase.